The following is a 182-amino-acid chain: Small ribosomal subunit protein uS4 (182 aa).

2 disordered regions span residues 1–23 and 158–182; these read MGHP…ADRI and SSVA…KDEE. The S4 RNA-binding domain occupies 103 to 170; sequence RRLQSLVFKR…AKQFETQETE (68 aa). Positions 167–182 are enriched in acidic residues; sequence QETEEVAAEEEPKDEE.

This sequence belongs to the universal ribosomal protein uS4 family. Part of the 30S ribosomal subunit. Contacts protein S5. The interaction surface between S4 and S5 is involved in control of translational fidelity.

Its function is as follows. One of the primary rRNA binding proteins, it binds directly to 16S rRNA where it nucleates assembly of the body of the 30S subunit. Functionally, with S5 and S12 plays an important role in translational accuracy. This is Small ribosomal subunit protein uS4 from Methanosphaera stadtmanae (strain ATCC 43021 / DSM 3091 / JCM 11832 / MCB-3).